The sequence spans 623 residues: Peptide transporter PTR2 (623 aa).

Disordered regions lie at residues M1–D20 and D31–E58. Transmembrane regions (helical) follow at residues A134 to G154, A163 to I183, N191 to M211, I250 to Y270, F277 to I297, I385 to M405, F418 to L438, I448 to L468, L499 to Y519, L529 to T549, and L557 to A577.

Belongs to the major facilitator superfamily. Proton-dependent oligopeptide transporter (POT/PTR) (TC 2.A.17) family.

The protein localises to the membrane. In terms of biological role, uptake of small peptides. The sequence is that of Peptide transporter PTR2 (PTR2) from Candida albicans (Yeast).